Consider the following 820-residue polypeptide: Leucine--tRNA ligase (820 aa).

The 'HIGH' region signature appears at 42–52 (PYPSGDLHMGH). Residues 576–580 (KMSKS) carry the 'KMSKS' region motif. K579 serves as a coordination point for ATP.

This sequence belongs to the class-I aminoacyl-tRNA synthetase family.

The protein resides in the cytoplasm. It carries out the reaction tRNA(Leu) + L-leucine + ATP = L-leucyl-tRNA(Leu) + AMP + diphosphate. The protein is Leucine--tRNA ligase of Coxiella burnetii (strain RSA 493 / Nine Mile phase I).